Reading from the N-terminus, the 496-residue chain is Matrilin-1 (496 aa).

The N-terminal stretch at Met-1–Cys-22 is a signal peptide. Residues Ser-23–Val-222 form the VWFA 1 domain. Asn-76 carries an N-linked (GlcNAc...) asparagine glycan. The EGF-like domain occupies Val-223 to Asn-263. Intrachain disulfides connect Cys-227–Cys-238, Cys-234–Cys-247, and Cys-249–Cys-262. The VWFA 2 domain maps to Val-264–Val-453. Asn-344 carries an N-linked (GalNAc...) asparagine glycan. The stretch at Gln-467–Val-495 forms a coiled coil.

As to quaternary structure, homotrimer. Part of a complex composed of MATN1 (via VWFA1 domain), type 2 collagens and type 6 collagens. Forms a complex (via covalent bonds) with ACAN; the interaction increases in abundance with increasing age of the organism via an increase in occupancy of MATN1 binding sites. Interacts with COMP. N-glycosylated; reduces binding affinity for type 2 collagens.

Its subcellular location is the secreted. The protein resides in the extracellular space. It is found in the extracellular matrix. Functionally, a major component of the extracellular matrix of non-articular cartilage. Binds to type 2 collagens and forms long concatenated protein networks as part of the extracellular matrix. Required for the network-like organization and bundling of collagen fibrils surrounding chondrocytes in the zones of maturation and hypertrophy. Required for mechanotransduction and adaption to mechanical loading in cartilage chondrocytes, resulting in an increase in expression of the extracellular matrix components ACAN and COL2A1. Acts as a moderator of angiogenesis in response to injury. The protein is Matrilin-1 of Homo sapiens (Human).